Consider the following 335-residue polypeptide: Leucine-rich repeat-containing protein 39 (335 aa).

A coiled-coil region spans residues 10 to 47 (AVNAVKEVWEKRIKKLNEDLKREKEFQHKLVRIWEERV). LRR repeat units lie at residues 84–105 (QLQE…IGRF), 107–128 (NLIV…IGLL), 130–151 (RLQE…LSNC), 153–176 (SLEK…SNLL), 177–197 (KLTH…AVLN), 200–221 (ALEW…IERM), 223–244 (NLHT…ISNM), 246–267 (NLGT…MEEM), and 269–290 (NLRF…PPSE).

In terms of assembly, interacts with MYH7 (via C-terminus). Highly expressed in skeletal muscle and heart. Not detected in other tissues tested.

The protein localises to the cytoplasm. The protein resides in the myofibril. Its subcellular location is the sarcomere. It localises to the m line. Its function is as follows. Component of the sarcomeric M-band which plays a role in myocyte response to biomechanical stress. May regulate expression of other M-band proteins via an SRF-dependent pathway. Important for normal contractile function in heart. This chain is Leucine-rich repeat-containing protein 39 (LRRC39), found in Homo sapiens (Human).